The sequence spans 557 residues: DNA ligase B (557 aa).

Lys125 (N6-AMP-lysine intermediate) is an active-site residue.

This sequence belongs to the NAD-dependent DNA ligase family. LigB subfamily.

It catalyses the reaction NAD(+) + (deoxyribonucleotide)n-3'-hydroxyl + 5'-phospho-(deoxyribonucleotide)m = (deoxyribonucleotide)n+m + AMP + beta-nicotinamide D-nucleotide.. Its function is as follows. Catalyzes the formation of phosphodiester linkages between 5'-phosphoryl and 3'-hydroxyl groups in double-stranded DNA using NAD as a coenzyme and as the energy source for the reaction. In Pseudomonas entomophila (strain L48), this protein is DNA ligase B.